A 523-amino-acid chain; its full sequence is NADP-specific glutamate dehydrogenase (523 aa).

Positions 26-50 are disordered; it reads CARGRSAKRDVAAKRLRSRSPRMDA. K202 is a catalytic residue.

Belongs to the Glu/Leu/Phe/Val dehydrogenases family. As to quaternary structure, homo- and heterohexamer of alpha and beta subunits. Both subunits are encoded by the same gene. Post-translationally, the N-termini of the alpha and the beta chains are blocked.

It localises to the plastid. The protein localises to the chloroplast. It catalyses the reaction L-glutamate + NADP(+) + H2O = 2-oxoglutarate + NH4(+) + NADPH + H(+). This Chlorella sorokiniana (Freshwater green alga) protein is NADP-specific glutamate dehydrogenase.